We begin with the raw amino-acid sequence, 103 residues long: Large ribosomal subunit protein bL21 (103 aa).

This sequence belongs to the bacterial ribosomal protein bL21 family. As to quaternary structure, part of the 50S ribosomal subunit. Contacts protein L20.

Its function is as follows. This protein binds to 23S rRNA in the presence of protein L20. The sequence is that of Large ribosomal subunit protein bL21 from Methylibium petroleiphilum (strain ATCC BAA-1232 / LMG 22953 / PM1).